The chain runs to 153 residues: uncharacterized protein (153 aa).

The next 2 helical transmembrane spans lie at 16-36 (ILACLLLIFLMATIFLLILEI) and 97-117 (ALTTTLSIILLVCIIMACIIC).

It is found in the membrane. This is an uncharacterized protein from Human herpesvirus 6A (strain Uganda-1102) (HHV-6 variant A).